Here is a 402-residue protein sequence, read N- to C-terminus: Argininosuccinate synthase (402 aa).

ATP-binding positions include 10–18 and Ala-37; that span reads AYSGGLDTS. Positions 88 and 93 each coordinate L-citrulline. Gly-118 contributes to the ATP binding site. Thr-120, Asn-124, and Asp-125 together coordinate L-aspartate. Asn-124 provides a ligand contact to L-citrulline. Residues Arg-128, Ser-179, Ser-188, Glu-264, and Tyr-276 each contribute to the L-citrulline site.

The protein belongs to the argininosuccinate synthase family. Type 1 subfamily. As to quaternary structure, homotetramer.

The protein resides in the cytoplasm. It carries out the reaction L-citrulline + L-aspartate + ATP = 2-(N(omega)-L-arginino)succinate + AMP + diphosphate + H(+). Its pathway is amino-acid biosynthesis; L-arginine biosynthesis; L-arginine from L-ornithine and carbamoyl phosphate: step 2/3. The polypeptide is Argininosuccinate synthase (Alkalilimnicola ehrlichii (strain ATCC BAA-1101 / DSM 17681 / MLHE-1)).